The sequence spans 61 residues: Small ribosomal subunit protein uS14 (61 aa).

Residues cysteine 24, cysteine 27, cysteine 40, and cysteine 43 each contribute to the Zn(2+) site.

The protein belongs to the universal ribosomal protein uS14 family. Zinc-binding uS14 subfamily. Part of the 30S ribosomal subunit. Contacts proteins S3 and S10. Requires Zn(2+) as cofactor.

In terms of biological role, binds 16S rRNA, required for the assembly of 30S particles and may also be responsible for determining the conformation of the 16S rRNA at the A site. In Limosilactobacillus fermentum (strain NBRC 3956 / LMG 18251) (Lactobacillus fermentum), this protein is Small ribosomal subunit protein uS14.